Reading from the N-terminus, the 228-residue chain is MCDNDMADIQSKLSSFCEEIRALALKEGYNLEGDKSPSSKPYFMSWPKEIDVNHPNFAFFTKLQFQYDKSLETILNSCYLQELQLDPTRIIETLQQHFNNSILRYADIENISDVKDESPMSFDTEHECTDTSEDISDKSEISSTNSDNPIQNCYPTYKRSFIKHESRGILEKIFKVKQCPNTSERLYIAQKLDLTPSQVRIWFTNKRMRAKKHTTGKGTKRKSKKYPS.

The segment covering 120-140 has biased composition (basic and acidic residues); it reads MSFDTEHECTDTSEDISDKSE. Positions 120-149 are disordered; that stretch reads MSFDTEHECTDTSEDISDKSEISSTNSDNP. A DNA-binding region (homeobox) is located at residues 155-214; that stretch reads PTYKRSFIKHESRGILEKIFKVKQCPNTSERLYIAQKLDLTPSQVRIWFTNKRMRAKKHT.

Belongs to the MATA1 family. As to quaternary structure, forms a heterodimer with ALPHA2.

The protein resides in the nucleus. Mating type proteins are sequence specific DNA-binding proteins that act as master switches in yeast differentiation by controlling gene expression in a cell type-specific fashion. Transcriptional corepressor that acts in conjunction with ALPHA2 to repress transcription of haploid-specific genes. The protein is Mating-type protein A1 (MATA1) of Kluyveromyces lactis (strain ATCC 8585 / CBS 2359 / DSM 70799 / NBRC 1267 / NRRL Y-1140 / WM37) (Yeast).